We begin with the raw amino-acid sequence, 686 residues long: XK-related protein 5 (686 aa).

5 consecutive transmembrane segments (helical) span residues 33-53 (LLWG…QALS), 205-225 (HFWV…WLVA), 239-259 (LFNL…WDSP), 265-285 (VTFY…ATDF), and 297-317 (IAGV…YYSL). 3 disordered regions span residues 340–362 (DKTE…ESSG), 444–470 (LQRK…NSSA), and 490–589 (FASD…VGLA). 2 stretches are compositionally biased toward polar residues: residues 455-470 (LPSS…NSSA) and 490-509 (FASD…TQGE). Over residues 523 to 536 (QGKGTGGQQRGGEG) the composition is skewed to gly residues. Positions 550–567 (VATSSQQEGSPATLQTAH) are enriched in polar residues.

It belongs to the XK family.

Its subcellular location is the cell membrane. This Pan troglodytes (Chimpanzee) protein is XK-related protein 5.